Reading from the N-terminus, the 423-residue chain is Dihydroorotase-like protein (423 aa).

It belongs to the metallo-dependent hydrolases superfamily. DHOase family. PyrC' subfamily. In terms of assembly, heterododecamer of 6 active PyrB subunits and 6 non-catalytic PyrC' subunits.

Functionally, non-functional DHOase. This is Dihydroorotase-like protein (pyrC') from Pseudomonas aeruginosa (strain ATCC 15692 / DSM 22644 / CIP 104116 / JCM 14847 / LMG 12228 / 1C / PRS 101 / PAO1).